We begin with the raw amino-acid sequence, 129 residues long: Glyoxalase domain-containing protein 5 homolog (129 aa).

Residues 5 to 128 enclose the VOC domain; that stretch reads RLDHLVLTVS…DYNLIEISNY (124 aa).

It belongs to the glyoxalase I family.

This is Glyoxalase domain-containing protein 5 homolog (glod5) from Dictyostelium discoideum (Social amoeba).